The primary structure comprises 559 residues: Nuclear envelope integral membrane protein (559 aa).

The signal sequence occupies residues 1-15; sequence MRLLTLALLVAGSLA. Asn67, Asn81, and Asn114 each carry an N-linked (GlcNAc...) asparagine glycan. 5 helical membrane-spanning segments follow: residues 164 to 184, 192 to 212, 218 to 238, 267 to 287, and 290 to 310; these read YTSGCSFGLLASLLLVAFIVW, IGVPILIGGWSVSLYMLHFAW, IMIEYQKYVIGYFATVLLISM, LIYFSVQMVEVSTGTIGALII, and ICRGFLFAGIRWYFVGLKAVW. Asn408 and Asn465 each carry an N-linked (GlcNAc...) asparagine glycan. 2 disordered regions span residues 475-494 and 510-559; these read RRDSTPRHGNFQSEHRPRMP and KNGR…DADE. The segment covering 517–526 has biased composition (polar residues); that stretch reads PSSSTASGMT. Residues 530 to 539 show a composition bias toward basic and acidic residues; it reads YMRKARRIDA.

It belongs to the NEMP family.

It is found in the nucleus inner membrane. Its function is as follows. Contributes to nuclear envelope stiffness in germ cells. Required for fertility. In Caenorhabditis elegans, this protein is Nuclear envelope integral membrane protein.